The primary structure comprises 1335 residues: Regulatory-associated protein of mTOR (1335 aa).

Phosphoserine is present on residues serine 44 and serine 122. Serine 696 is modified (phosphoserine; by MAPK8). Threonine 700 carries an O-linked (GlcNAc) threonine glycan. Position 706 is a phosphothreonine; by MAPK8 (threonine 706). 2 positions are modified to phosphoserine; by RPS6KA1: serine 719 and serine 721. Serine 722 carries the post-translational modification Phosphoserine; by AMPK and RPS6KA1. Phosphoserine is present on serine 738. Residue serine 791 is modified to Phosphoserine; by PKA. Serine 792 is subject to Phosphoserine; by AMPK. Phosphoserine is present on residues serine 836 and serine 855. The interval valine 850 to aspartate 943 is disordered. The span at leucine 851–asparagine 866 shows a compositional bias: polar residues. Residue serine 859 is modified to Phosphoserine; by MTOR. Serine 863 carries the post-translational modification Phosphoserine; by MAPK8, MTOR and NLK. Position 865 is a phosphothreonine (threonine 865). The segment covering alanine 874–serine 887 has biased composition (low complexity). The residue at position 877 (serine 877) is a Phosphoserine; by TBK1. Residues lysine 932 and lysine 948 each participate in a glycyl lysine isopeptide (Lys-Gly) (interchain with G-Cter in ubiquitin) cross-link. Serine 982 is subject to Phosphoserine. WD repeat units lie at residues asparagine 1020–histidine 1061, proline 1065–proline 1106, threonine 1121–aspartate 1160, glycine 1164–arginine 1203, glutamate 1209–valine 1249, glutamine 1251–lysine 1291, and glutamine 1299–arginine 1335. An N6-acetyllysine modification is found at lysine 1097.

This sequence belongs to the WD repeat RAPTOR family. As to quaternary structure, part of the mechanistic target of rapamycin complex 1 (mTORC1) which contains MTOR, MLST8 and RPTOR. mTORC1 associates with AKT1S1/PRAS40, which inhibits its activity. mTORC1 associates with DEPTOR, which regulates its activity. mTORC1 binds to and is inhibited by FKBP12-rapamycin. Forms a complex with MTOR under both leucine-rich and -poor conditions. Interacts with (via TOS motifs) EIF4EBP1 and RPS6KB1; interaction is independent of its association with MTOR. Binds preferentially to poorly or non-phosphorylated forms of EIF4EBP1, and this binding is critical to the ability of MTOR to catalyze phosphorylation. Interacts with ULK1 in a nutrient-dependent manner; the interaction is reduced during starvation. Interacts with GTP-bound form of RagA/RRAGA or RagB/RRAGB and GDP-bound form of RagC/RRAGC or RagD/RRAGD, promoting recruitment of mTORC1 to the lysosomes. Interacts (when phosphorylated by AMPK) with 14-3-3 protein, leading to inhibition of its activity. Interacts with SPAG5; SPAG5 competes with MTOR for RPTOR-binding, resulting in decreased mTORC1 formation. Interacts with WAC; WAC positively regulates MTOR activity by promoting the assembly of the TTT complex composed of TELO2, TTI1 and TTI2 and the RUVBL complex composed of RUVBL1 and RUVBL2 into the TTT-RUVBL complex which leads to the dimerization of the mTORC1 complex and its subsequent activation. Interacts with G3BP1. The complex formed with G3BP1 and SPAG5 is increased by oxidative stress. Interacts with HTR6. Interacts with PIH1D1. Interacts with LARP1. Interacts with BRAT1. Interacts with SIK3. Interacts with SLC38A7; this interaction mediates the recruitment of mTORC1 to the lysosome and its subsequent activation. (Microbial infection) Interacts with vaccinia virus protein F17; this interaction dysregulates mTOR. Post-translationally, insulin-stimulated phosphorylation at Ser-863 by MTOR and MAPK8 regulates mTORC1 activity. Phosphorylated at Ser-863 by NLK in response to stress, disrupting the interaction with small GTPases Rag (RagA/RRAGA, RagB/RRAGB, RagC/RRAGC and/or RagD/RRAGD), thereby preventing lysosome recruitment and activation of the mTORC1 complex. Osmotic stress also induces phosphorylation at Ser-696, Thr-706 and Ser-863 by MAPK8. Ser-863 phosphorylation is required for phosphorylation at Ser-855 and Ser-859. In response to nutrient limitation, phosphorylated at Ser-722 and Ser-792 by AMPK; phosphorylation promotes interaction with 14-3-3 proteins, leading to negative regulation of the mTORC1 complex. Phosphorylation at Ser-722 and Ser-792 by AMPK in response to glucose starvation inhibits O-GlcNAcylation by OGT and subsequent activation of mTORC1. In response to growth factors, phosphorylated at Ser-719, Ser-721 and Ser-722 by RPS6KA1, which stimulates mTORC1 activity. Phosphorylation at Ser-791 by PKA downstream of cAMP inhibits the mTORC1 complex. Phosphorylated at Ser-877 by TBK1, leading to negative regulation of the mTORC1 complex. In terms of processing, O-GlcNAcylated by OGT upon glucose sufficiency, promoting interaction with small GTPases Rag (RagA/RRAGA, RagB/RRAGB, RagC/RRAGC and/or RagD/RRAGD) and subsequent recruitment of mTORC1 to lysosomal membranes, leading to activation of the mTORC1 complex. Phosphorylation at Ser-722 and Ser-792 by AMPK in response to glucose starvation inhibits O-GlcNAcylation. Acetylation at Lys-1097 by EP300/p300 in response to leucine metabolite acetyl-coA promotes its activity, leading to activation of the mTORC1 complex. Acetylation is decreased in response to fasting. Post-translationally, ubiquitinated, leading to its degradation by the proteasome. Deubiquitinated by OTUB1 via a non-catalytic mechanism. Ubiquitinated by an E3 ubiquitin ligase complex containing VHL. Highly expressed in skeletal muscle, and in a lesser extent in brain, lung, small intestine, kidney and placenta. In terms of tissue distribution, widely expressed, with highest levels in nasal mucosa and pituitary and lowest in spleen.

It is found in the lysosome membrane. It localises to the cytoplasm. Its subcellular location is the cytoplasmic granule. Component of the mechanistic target of rapamycin complex 1 (mTORC1), an evolutionarily conserved central nutrient sensor that stimulates anabolic reactions and macromolecule biosynthesis to promote cellular biomass generation and growth. In response to nutrients, growth factors or amino acids, mTORC1 is recruited to the lysosome membrane and promotes protein, lipid and nucleotide synthesis by phosphorylating several substrates, such as ribosomal protein S6 kinase (RPS6KB1 and RPS6KB2) and EIF4EBP1 (4E-BP1). In the same time, it inhibits catabolic pathways by phosphorylating the autophagy initiation components ULK1 and ATG13, as well as transcription factor TFEB, a master regulators of lysosomal biogenesis and autophagy. The mTORC1 complex is inhibited in response to starvation and amino acid depletion. Within the mTORC1 complex, RPTOR acts both as a molecular adapter, which (1) mediates recruitment of mTORC1 to lysosomal membranes via interaction with small GTPases Rag (RagA/RRAGA, RagB/RRAGB, RagC/RRAGC and/or RagD/RRAGD), and a (2) substrate-specific adapter, which promotes substrate specificity by binding to TOS motif-containing proteins and direct them towards the active site of the MTOR kinase domain for phosphorylation. mTORC1 complex regulates many cellular processes, such as odontoblast and osteoclast differentiation or neuronal transmission. mTORC1 complex in excitatory neuronal transmission is required for the prosocial behavior induced by the psychoactive substance lysergic acid diethylamide (LSD). This chain is Regulatory-associated protein of mTOR, found in Homo sapiens (Human).